Consider the following 166-residue polypeptide: Large ribosomal subunit protein mL41 (166 aa).

Residues 1-26 (MQNCIKLVPLALKCPQRAISTSAVLD) constitute a mitochondrion transit peptide.

It belongs to the mitochondrion-specific ribosomal protein mL41 family. In terms of assembly, component of the mitochondrial ribosome large subunit (39S) which comprises a 16S rRNA and about 50 distinct proteins.

It localises to the mitochondrion. The sequence is that of Large ribosomal subunit protein mL41 (mRpL41) from Drosophila pseudoobscura pseudoobscura (Fruit fly).